The following is an 899-amino-acid chain: Calcium-transporting ATPase 1 (899 aa).

4 helical membrane-spanning segments follow: residues 59-79 (FVKD…VTLG), 80-100 (NIDD…VGFV), 247-267 (QLSL…FFQG), and 282-302 (VAAI…LGVL). The active-site 4-aspartylphosphate intermediate is the D329. 4 helical membrane-spanning segments follow: residues 688 to 708 (FQLS…VFGF), 757 to 777 (QLLQ…IVVF), 827 to 847 (FNIA…ASPF), and 854 to 874 (EAIG…VLWV). S892 bears the Phosphoserine mark.

This sequence belongs to the cation transport ATPase (P-type) (TC 3.A.3) family.

It localises to the endoplasmic reticulum membrane. It catalyses the reaction Ca(2+)(in) + ATP + H2O = Ca(2+)(out) + ADP + phosphate + H(+). Its function is as follows. Transports calcium and manganese ions into the cell. Regulates cell morphogenesis through control of manganese and calcium homeostasis. The chain is Calcium-transporting ATPase 1 (pmr1) from Schizosaccharomyces pombe (strain 972 / ATCC 24843) (Fission yeast).